Here is a 218-residue protein sequence, read N- to C-terminus: Uracil-DNA glycosylase (218 aa).

Residue Asp59 is the Proton acceptor of the active site.

The protein belongs to the uracil-DNA glycosylase (UDG) superfamily. UNG family.

The protein localises to the cytoplasm. The enzyme catalyses Hydrolyzes single-stranded DNA or mismatched double-stranded DNA and polynucleotides, releasing free uracil.. Functionally, excises uracil residues from the DNA which can arise as a result of misincorporation of dUMP residues by DNA polymerase or due to deamination of cytosine. This is Uracil-DNA glycosylase from Staphylococcus saprophyticus subsp. saprophyticus (strain ATCC 15305 / DSM 20229 / NCIMB 8711 / NCTC 7292 / S-41).